A 428-amino-acid polypeptide reads, in one-letter code: UPF0597 protein PBPRB0240 (428 aa).

The protein belongs to the UPF0597 family.

This chain is UPF0597 protein PBPRB0240, found in Photobacterium profundum (strain SS9).